A 201-amino-acid chain; its full sequence is MSLSDSPSKSGNTGKDLISNNEAKNHEDEETHQKKRRRRTTDAEATLLEQYFLKTPKPSLIERQELSKKLKSSMTPRELQIWFQNKRQSLRRSNCLSRNRLEGTGENSLLRRKSTLTLCETSTGQAELFFQSWPLHSQSVVGEMIHHEQDDYNKENKQQKVVDTTKDISRGSNGNEDSAAHQELEECARSLVELQQQCNDH.

Positions 1 to 22 are enriched in polar residues; it reads MSLSDSPSKSGNTGKDLISNNE. A disordered region spans residues 1-42; the sequence is MSLSDSPSKSGNTGKDLISNNEAKNHEDEETHQKKRRRRTTD. The span at 23–32 shows a compositional bias: basic and acidic residues; it reads AKNHEDEETH. Positions 33 to 92 form a DNA-binding region, homeobox; that stretch reads QKKRRRRTTDAEATLLEQYFLKTPKPSLIERQELSKKLKSSMTPRELQIWFQNKRQSLRR.

Component of the MBF transcription factor complex. Post-translationally, phosphorylated in response to hydroxyurea. Phosphorylation inhibits the repressor activity and is dependent on rad3. However, the regulation of yox1 by rad3 is probably indirect.

The protein localises to the nucleus. Functionally, negative regulatory component of the MBF transcription factor complex involved in cell-cycle G1/S phase-specific gene expression and more particularly DNA replication checkpoint-dependent gene expression. This is MBF complex negative regulatory component yox1 (yox1) from Schizosaccharomyces pombe (strain 972 / ATCC 24843) (Fission yeast).